Reading from the N-terminus, the 168-residue chain is 3-dehydroquinate dehydratase (168 aa).

The active-site Proton acceptor is the Y22. Residues N76, H82, and D89 each coordinate substrate. The active-site Proton donor is H102. Substrate contacts are provided by residues 103–104 and R113; that span reads LT.

Belongs to the type-II 3-dehydroquinase family. Homododecamer.

It carries out the reaction 3-dehydroquinate = 3-dehydroshikimate + H2O. The protein operates within metabolic intermediate biosynthesis; chorismate biosynthesis; chorismate from D-erythrose 4-phosphate and phosphoenolpyruvate: step 3/7. Catalyzes a trans-dehydration via an enolate intermediate. In Helicobacter acinonychis (strain Sheeba), this protein is 3-dehydroquinate dehydratase.